We begin with the raw amino-acid sequence, 264 residues long: Rhodanese-like domain-containing protein 4A, chloroplastic (264 aa).

The N-terminal 60 residues, 1–60, are a transit peptide targeting the chloroplast; sequence MTSLPIILASSPLRNLTKPCSTSQIPKPIQNSTKQPPIHLLTKTNLSVTISQLIITSPVL. Residues 95–115 traverse the membrane as a helical segment; it reads FFVAGCTFTYLVVYPAVMFYL. A Rhodanese domain is found at 132 to 232; sequence NESDSQLLDI…ARGKNGWLAI (101 aa).

The protein resides in the plastid. It localises to the chloroplast. Its subcellular location is the membrane. The chain is Rhodanese-like domain-containing protein 4A, chloroplastic (STR4A) from Arabidopsis thaliana (Mouse-ear cress).